Reading from the N-terminus, the 37-residue chain is Trypsin inhibitor 3 (37 aa).

3 disulfides stabilise this stretch: cysteine 4/cysteine 21, cysteine 11/cysteine 25, and cysteine 20/cysteine 36.

In terms of biological role, trypsin inhibitor. This Spinacia oleracea (Spinach) protein is Trypsin inhibitor 3.